Reading from the N-terminus, the 245-residue chain is tRNA pseudouridine synthase A (245 aa).

The active-site Nucleophile is the Asp52. Tyr111 serves as a coordination point for substrate.

Belongs to the tRNA pseudouridine synthase TruA family. As to quaternary structure, homodimer.

The enzyme catalyses uridine(38/39/40) in tRNA = pseudouridine(38/39/40) in tRNA. Its function is as follows. Formation of pseudouridine at positions 38, 39 and 40 in the anticodon stem and loop of transfer RNAs. The polypeptide is tRNA pseudouridine synthase A (Ehrlichia chaffeensis (strain ATCC CRL-10679 / Arkansas)).